The primary structure comprises 131 residues: Pancreatic polypeptide prohormone (131 aa).

Residues 1 to 29 (MAAAHRCLFLLLLSTCVALLLQPPLGALG) form the signal peptide. Position 65 is a tyrosine amide (Y65).

Belongs to the NPY family.

It localises to the secreted. Its function is as follows. Hormone secreted by pancreatic cells that acts as a regulator of pancreatic and gastrointestinal functions probably by signaling through the G protein-coupled receptor NPY4R2. The sequence is that of Pancreatic polypeptide prohormone (PPY) from Bos taurus (Bovine).